The following is a 1086-amino-acid chain: Ribonuclease 3 (1086 aa).

Disordered stretches follow at residues 1–77 and 158–233; these read MSDE…DSPR and CHSM…LRNF. Residues 13-23 show a composition bias toward basic residues; sequence PKHKRARRKKY. Basic and acidic residues predominate over residues 24-35; the sequence is QKEYQERHKEEM. The segment covering 43 to 53 has biased composition (polar residues); that stretch reads FQNQPSTSSAP. Residues 159-168 are compositionally biased toward basic residues; it reads HSMKGRKTPK. Positions 181-190 are enriched in acidic residues; it reads VSDDSNDSQD. The span at 191–201 shows a compositional bias: polar residues; the sequence is EASTSEPTNRQ. Over residues 203 to 217 the composition is skewed to basic and acidic residues; that stretch reads PEADKTGEVKDEKQT. RNase III domains are found at residues 607 to 781 and 833 to 957; these read LDVF…LDGG and FHAL…VDRG. Residues glutamate 694, asparagine 767, glutamate 770, glutamate 873, aspartate 943, and glutamate 946 each contribute to the Mg(2+) site. The DRBM domain maps to 984–1059; it reads DAKSHLQQWC…AELALANLES (76 aa).

This sequence belongs to the ribonuclease III family. Requires Mg(2+) as cofactor. The cofactor is Mn(2+).

The protein localises to the nucleus. It catalyses the reaction Endonucleolytic cleavage to 5'-phosphomonoester.. Executes the initial step of microRNA (miRNA) processing in the nucleus, that is the cleavage of pri-miRNA to release pre-miRNA. Involved in pre-rRNA processing. Cleaves double-strand RNA and does not cleave single-strand RNA. Involved in fertility. Required for the function or synthesis of the let-7 miRNA. In Caenorhabditis elegans, this protein is Ribonuclease 3 (drsh-1).